A 1178-amino-acid chain; its full sequence is DNA-directed RNA polymerase subunit beta' (1178 aa).

4 residues coordinate Zn(2+): Cys60, Cys62, Cys75, and Cys78. Asp450, Asp452, and Asp454 together coordinate Mg(2+). 4 residues coordinate Zn(2+): Cys795, Cys869, Cys876, and Cys879.

This sequence belongs to the RNA polymerase beta' chain family. In terms of assembly, the RNAP catalytic core consists of 2 alpha, 1 beta, 1 beta' and 1 omega subunit. When a sigma factor is associated with the core the holoenzyme is formed, which can initiate transcription. Mg(2+) is required as a cofactor. The cofactor is Zn(2+).

The enzyme catalyses RNA(n) + a ribonucleoside 5'-triphosphate = RNA(n+1) + diphosphate. Functionally, DNA-dependent RNA polymerase catalyzes the transcription of DNA into RNA using the four ribonucleoside triphosphates as substrates. This is DNA-directed RNA polymerase subunit beta' from Clostridium botulinum (strain Okra / Type B1).